The chain runs to 449 residues: Putative BTB/POZ domain-containing protein L742 (449 aa).

Residues 79 to 148 (EDGYVYINIG…LTMSNQELSG (70 aa)) form the BTB domain.

Belongs to the mimivirus BTB/WD family.

In Acanthamoeba polyphaga mimivirus (APMV), this protein is Putative BTB/POZ domain-containing protein L742.